A 113-amino-acid polypeptide reads, in one-letter code: Transmembrane protein 256 (113 aa).

The N-terminal stretch at 1–29 (MAGVGAAFRRLGALSGAGALGLASYGAHG) is a signal peptide. The Extracellular segment spans residues 30–63 (AQFPDAYGKELFDKANKHHFLHSLALLGVPSCRK). At Lys43 the chain carries N6-acetyllysine. A helical membrane pass occupies residues 64–84 (PVWAGLLLASGTTLFCTSFYY). Topologically, residues 85-92 (QALSGDTS) are cytoplasmic. A helical membrane pass occupies residues 93-113 (IQTLGPVGGSLLILGWLALAF).

It belongs to the TMEM256 family.

It localises to the membrane. The sequence is that of Transmembrane protein 256 (Tmem256) from Mus musculus (Mouse).